A 443-amino-acid chain; its full sequence is dTDP-4-dehydro-6-deoxy-alpha-D-glucopyranose 2,3-dehydratase (443 aa).

DTDP-4-dehydro-6-deoxy-alpha-D-glucose is bound by residues Trp35, 118–122 (TFSNY), Ser157, Trp260, Arg325, 341–343 (QCN), 346–347 (NL), and 377–380 (EGGR).

This sequence belongs to the hexose 2,3-dehydratase family. Homodimer.

The enzyme catalyses dTDP-4-dehydro-6-deoxy-alpha-D-glucose = dTDP-3,4-didehydro-2,6-dideoxy-alpha-D-glucose + H2O. It functions in the pathway antibiotic biosynthesis; granaticin biosynthesis. Involved in the biosynthesis of the 2,6-deoxysugar, dTDP-L-rhodinose, attached to the benzoisochromane quinone chromophore to produce the aglycone antibiotics granaticin and granaticin B. Catalyzes the removal of the hydroxyl group at position C-2 of the hexose ring of dTDP-4-dehydro-6-deoxy-alpha-D-glucopyranose, and the oxidation of the hydroxyl group at position C-3 to form a carbonyl functionality. The product of the reaction, dTDP-2,6-dideoxy-D-glycero-hex-2-enos-4-ulose, is a highly unstable diketosugar, which spontaneously forms dTDP-3,4-didehydro-2,6-dideoxy-alpha-D-glucose. This is dTDP-4-dehydro-6-deoxy-alpha-D-glucopyranose 2,3-dehydratase from Streptomyces violaceoruber.